We begin with the raw amino-acid sequence, 123 residues long: Small ribosomal subunit protein uS12 (123 aa).

A 3-methylthioaspartic acid modification is found at D89.

The protein belongs to the universal ribosomal protein uS12 family. Part of the 30S ribosomal subunit. Contacts proteins S8 and S17. May interact with IF1 in the 30S initiation complex.

In terms of biological role, with S4 and S5 plays an important role in translational accuracy. Its function is as follows. Interacts with and stabilizes bases of the 16S rRNA that are involved in tRNA selection in the A site and with the mRNA backbone. Located at the interface of the 30S and 50S subunits, it traverses the body of the 30S subunit contacting proteins on the other side and probably holding the rRNA structure together. The combined cluster of proteins S8, S12 and S17 appears to hold together the shoulder and platform of the 30S subunit. This chain is Small ribosomal subunit protein uS12, found in Prochlorococcus marinus (strain MIT 9211).